The primary structure comprises 786 residues: Endonuclease MutS2 (786 aa).

335 to 342 (GPNTGGKT) lines the ATP pocket. In terms of domain architecture, Smr spans 711–786 (LDLRGERFEN…GLGVTVVELK (76 aa)).

This sequence belongs to the DNA mismatch repair MutS family. MutS2 subfamily. As to quaternary structure, homodimer. Binds to stalled ribosomes, contacting rRNA.

Functionally, endonuclease that is involved in the suppression of homologous recombination and thus may have a key role in the control of bacterial genetic diversity. Acts as a ribosome collision sensor, splitting the ribosome into its 2 subunits. Detects stalled/collided 70S ribosomes which it binds and splits by an ATP-hydrolysis driven conformational change. Acts upstream of the ribosome quality control system (RQC), a ribosome-associated complex that mediates the extraction of incompletely synthesized nascent chains from stalled ribosomes and their subsequent degradation. Probably generates substrates for RQC. This Bacillus anthracis (strain A0248) protein is Endonuclease MutS2.